Consider the following 474-residue polypeptide: Glutamyl-tRNA(Gln) amidotransferase subunit A (474 aa).

Residues lysine 76 and serine 151 each act as charge relay system in the active site. The active-site Acyl-ester intermediate is the serine 175.

This sequence belongs to the amidase family. GatA subfamily. Heterotrimer of A, B and C subunits.

It carries out the reaction L-glutamyl-tRNA(Gln) + L-glutamine + ATP + H2O = L-glutaminyl-tRNA(Gln) + L-glutamate + ADP + phosphate + H(+). Allows the formation of correctly charged Gln-tRNA(Gln) through the transamidation of misacylated Glu-tRNA(Gln) in organisms which lack glutaminyl-tRNA synthetase. The reaction takes place in the presence of glutamine and ATP through an activated gamma-phospho-Glu-tRNA(Gln). The sequence is that of Glutamyl-tRNA(Gln) amidotransferase subunit A from Chlorobium limicola (strain DSM 245 / NBRC 103803 / 6330).